The primary structure comprises 616 residues: Dihydroxy-acid dehydratase (616 aa).

D81 contacts Mg(2+). C122 is a [2Fe-2S] cluster binding site. Residues D123 and K124 each contribute to the Mg(2+) site. K124 carries the N6-carboxylysine modification. Residue C195 participates in [2Fe-2S] cluster binding. E491 lines the Mg(2+) pocket. Residue S517 is the Proton acceptor of the active site.

Belongs to the IlvD/Edd family. Homodimer. The cofactor is [2Fe-2S] cluster. Requires Mg(2+) as cofactor.

It catalyses the reaction (2R)-2,3-dihydroxy-3-methylbutanoate = 3-methyl-2-oxobutanoate + H2O. The enzyme catalyses (2R,3R)-2,3-dihydroxy-3-methylpentanoate = (S)-3-methyl-2-oxopentanoate + H2O. It participates in amino-acid biosynthesis; L-isoleucine biosynthesis; L-isoleucine from 2-oxobutanoate: step 3/4. It functions in the pathway amino-acid biosynthesis; L-valine biosynthesis; L-valine from pyruvate: step 3/4. In terms of biological role, functions in the biosynthesis of branched-chain amino acids. Catalyzes the dehydration of (2R,3R)-2,3-dihydroxy-3-methylpentanoate (2,3-dihydroxy-3-methylvalerate) into 2-oxo-3-methylpentanoate (2-oxo-3-methylvalerate) and of (2R)-2,3-dihydroxy-3-methylbutanoate (2,3-dihydroxyisovalerate) into 2-oxo-3-methylbutanoate (2-oxoisovalerate), the penultimate precursor to L-isoleucine and L-valine, respectively. In Escherichia coli O157:H7 (strain EC4115 / EHEC), this protein is Dihydroxy-acid dehydratase.